A 316-amino-acid polypeptide reads, in one-letter code: Putative mannose-6-phosphate isomerase YvyI (316 aa).

Zn(2+) contacts are provided by His98, Glu116, and His173. Arg193 is an active-site residue.

This sequence belongs to the mannose-6-phosphate isomerase type 1 family. The cofactor is Zn(2+).

The enzyme catalyses D-mannose 6-phosphate = D-fructose 6-phosphate. The chain is Putative mannose-6-phosphate isomerase YvyI (yvyI) from Bacillus subtilis (strain 168).